We begin with the raw amino-acid sequence, 645 residues long: Rho GTPase-activating protein 25 (645 aa).

One can recognise a PH domain in the interval 46 to 151 (RPIKMGWLKK…WVKFLRRVAG (106 aa)). Positions 159–353 (QRLDETVAYE…MMIRDHEVLF (195 aa)) constitute a Rho-GAP domain. Disordered stretches follow at residues 355–444 (KSKD…QTLP) and 469–550 (FWSP…EEEI). Residues S362 and S395 each carry the phosphoserine modification. A compositionally biased stretch (low complexity) spans 393–409 (TDSFSSMTSDSDTTSPT). T406 carries the post-translational modification Phosphothreonine. Residues 420-431 (DSSKVPREKPGD) are compositionally biased toward basic and acidic residues. Over residues 487–504 (SQDLRQLSDSQRTSTYDN) the composition is skewed to polar residues. Phosphoserine is present on S536. A coiled-coil region spans residues 541-644 (GKKNSGEEEI…VKSMKEPKTE (104 aa)).

GTPase activator for the Rho-type GTPases by converting them to an inactive GDP-bound state. This Homo sapiens (Human) protein is Rho GTPase-activating protein 25 (ARHGAP25).